Consider the following 207-residue polypeptide: MRLLNIVSSPRGARSASIAVARAFVDAYRQTGATIDVDTLNVWEEDLPDFDSGAIGAKYKGVANAPMDEAEQSIWRRIQSLVKRFQDADRIVVGVPMWNFGYPYKLKQLIDLVSQRNMLFTFDGNAYAPLLEIPRALVIHVRGQSREPGAGADNPGFRHQADYIEFWLRFIGVSEVRSLTVEHTWGARASDSIERAQARAVEMAAEF.

FMN contacts are provided by residues Ser9, 15 to 17 (SAS), and 97 to 100 (MWNF).

This sequence belongs to the azoreductase type 1 family. In terms of assembly, homodimer. FMN is required as a cofactor.

It catalyses the reaction 2 a quinone + NADH + H(+) = 2 a 1,4-benzosemiquinone + NAD(+). It carries out the reaction N,N-dimethyl-1,4-phenylenediamine + anthranilate + 2 NAD(+) = 2-(4-dimethylaminophenyl)diazenylbenzoate + 2 NADH + 2 H(+). Functionally, quinone reductase that provides resistance to thiol-specific stress caused by electrophilic quinones. In terms of biological role, also exhibits azoreductase activity. Catalyzes the reductive cleavage of the azo bond in aromatic azo compounds to the corresponding amines. This is FMN-dependent NADH:quinone oxidoreductase 2 from Burkholderia lata (strain ATCC 17760 / DSM 23089 / LMG 22485 / NCIMB 9086 / R18194 / 383).